The sequence spans 151 residues: Ribosome maturation factor RimP (151 aa).

This sequence belongs to the RimP family.

The protein localises to the cytoplasm. In terms of biological role, required for maturation of 30S ribosomal subunits. This Aliivibrio fischeri (strain ATCC 700601 / ES114) (Vibrio fischeri) protein is Ribosome maturation factor RimP.